Consider the following 134-residue polypeptide: Prefoldin subunit 4 (134 aa).

At A2 the chain carries N-acetylalanine. S125 carries the phosphoserine modification.

The protein belongs to the prefoldin subunit beta family. Heterohexamer of two PFD-alpha type and four PFD-beta type subunits. Interacts with URI1; the interaction is phosphorylation-dependent and occurs in a growth-dependent manner.

It is found in the nucleus. It localises to the cytoplasm. The protein localises to the mitochondrion. Functionally, binds specifically to cytosolic chaperonin (c-CPN) and transfers target proteins to it. Binds to nascent polypeptide chain and promotes folding in an environment in which there are many competing pathways for nonnative proteins. This Bos taurus (Bovine) protein is Prefoldin subunit 4 (PFDN4).